The sequence spans 308 residues: 3'(2'),5'-bisphosphate nucleotidase 1 (308 aa).

Ala2 bears the N-acetylalanine mark. The Proton acceptor role is filled by Asp51. The Mg(2+) site is built by Glu74, Asp117, Val119, and Asp120. Catalysis depends on Thr122, which acts as the Proton acceptor. Thr122 is modified (phosphothreonine). Residues Thr195, His198, Gly220, and Lys224 each contribute to the AMP site. Ser240 is modified (phosphoserine). Lys244 is modified (N6-succinyllysine). A Mg(2+)-binding site is contributed by Asp247.

The protein belongs to the inositol monophosphatase superfamily. The cofactor is Mg(2+). As to expression, highly expressed in heart, brain, spleen, lung, liver, skeletal muscle, kidney and testis.

The enzyme catalyses adenosine 3',5'-bisphosphate + H2O = AMP + phosphate. It carries out the reaction adenosine 2',5'-bisphosphate + H2O = AMP + phosphate. The catalysed reaction is 3'-phosphoadenylyl sulfate + H2O = adenosine 5'-phosphosulfate + phosphate. It catalyses the reaction 1D-myo-inositol 1,4-bisphosphate + H2O = 1D-myo-inositol 4-phosphate + phosphate. The enzyme catalyses 1D-myo-inositol 1,3,4-trisphosphate + H2O = 1D-myo-inositol 3,4-bisphosphate + phosphate. Inhibited by Li(+) and Ca(2+), but not by Na(+). Functionally, phosphatase that converts 3'(2')-phosphoadenosine 5'-phosphate (PAP) to AMP and adenosine 3'-phosphate 5'-phosphosulfate (PAPS) to adenosine 5'-phosphosulfate (APS). Is also able to hydrolyze inositol 1,4-bisphosphate (Ins(1,4)P2) and inositol 1,3,4-trisphosphate (Ins(1,3,4)P3), but is not active on AMP, 3'-AMP, fructose-1,6-bisphosphate, Ins(1)P, Ins(2)P and Ins(1,4,5)P3. Probably prevents the toxic accumulation of PAP, a compound which inhibits a variety of proteins, including PAPS-utilizing enzymes such as sulfotransferases, and RNA processing enzymes. Could also play a role in inositol recycling and phosphoinositide metabolism. This chain is 3'(2'),5'-bisphosphate nucleotidase 1 (Bpnt1), found in Rattus norvegicus (Rat).